Here is a 275-residue protein sequence, read N- to C-terminus: NH(3)-dependent NAD(+) synthetase (275 aa).

Residue glycine 50–serine 57 coordinates ATP. Aspartate 56 is a Mg(2+) binding site. Arginine 147 contacts deamido-NAD(+). Position 167 (threonine 167) interacts with ATP. Glutamate 172 contacts Mg(2+). Lysine 180 and aspartate 187 together coordinate deamido-NAD(+). ATP is bound by residues lysine 196 and threonine 218. Position 267–268 (histidine 267–lysine 268) interacts with deamido-NAD(+).

Belongs to the NAD synthetase family. Homodimer.

It carries out the reaction deamido-NAD(+) + NH4(+) + ATP = AMP + diphosphate + NAD(+) + H(+). It functions in the pathway cofactor biosynthesis; NAD(+) biosynthesis; NAD(+) from deamido-NAD(+) (ammonia route): step 1/1. Catalyzes the ATP-dependent amidation of deamido-NAD to form NAD. Uses ammonia as a nitrogen source. The protein is NH(3)-dependent NAD(+) synthetase of Pseudomonas entomophila (strain L48).